Consider the following 321-residue polypeptide: Carnitine monooxygenase reductase subunit (321 aa).

Residues 4-109 (YQMFEVQVSQ…STPNNLFALI (106 aa)) enclose the FAD-binding FR-type domain. One can recognise a 2Fe-2S ferredoxin-type domain in the interval 233-321 (DAFTLVLARS…AKGKRLVLDL (89 aa)). Positions 270, 275, 278, and 308 each coordinate [2Fe-2S] cluster.

It belongs to the PDR/VanB family. CntB subfamily. As to quaternary structure, composed of an oxygenase subunit (yeaW) and a reductase subunit (yeaX). It depends on FMN as a cofactor. [2Fe-2S] cluster serves as cofactor.

It carries out the reaction (R)-carnitine + NADH + O2 + H(+) = (3R)-3-hydroxy-4-oxobutanoate + trimethylamine + NAD(+) + H2O. The enzyme catalyses (R)-carnitine + NADPH + O2 + H(+) = (3R)-3-hydroxy-4-oxobutanoate + trimethylamine + NADP(+) + H2O. It functions in the pathway amine and polyamine metabolism; carnitine metabolism. Its function is as follows. Converts carnitine to trimethylamine and malic semialdehyde. Can also use gamma-butyrobetaine, choline and betaine as substrates. The polypeptide is Carnitine monooxygenase reductase subunit (yeaX) (Escherichia coli (strain K12)).